Consider the following 2999-residue polypeptide: TPR and ankyrin repeat-containing protein 1 (2999 aa).

The segment at Met-1–Cys-87 is disordered. The segment covering Arg-19–Glu-36 has biased composition (low complexity). 2 TPR repeats span residues Ala-144 to Tyr-177 and Lys-179 to Ser-211. ANK repeat units lie at residues Glu-297–Thr-327, Ile-328–Glu-361, Ala-369–Leu-405, Ser-538–Ser-567, Glu-572–Phe-593, and Asn-621–Leu-654. Disordered stretches follow at residues Arg-684–Gly-722, Met-773–Gln-831, Leu-1151–Pro-1211, and Trp-1318–Asp-1344. Polar residues-rich tracts occupy residues Ser-699 to Lys-717 and Thr-801 to Val-815. Residues Leu-1151 to Glu-1164 are compositionally biased toward basic and acidic residues. Over residues Trp-1318–Ala-1327 the composition is skewed to acidic residues. TPR repeat units lie at residues Pro-1772–Lys-1805 and Leu-1866–Leu-1899.

Expressed only in the brain. Detected in the hippocampus, hypothalamus and cingulate gyrus.

In Mus musculus (Mouse), this protein is TPR and ankyrin repeat-containing protein 1 (Trank1).